The sequence spans 403 residues: MNGIFAIEKPSGITSNQFMLKLQHALTKSQVFSKEIQRATAERKQQYEKQTGKKASKRKLRKVSKVKMGHGGTLDPLASGVLVIGIGAGTKKLANYLSGTVKVYESEALFGVSTTSGDVEGEILSQNSVKHLNFDDLKTVEEKFVGQLKQTPPIYAALKMDGKPLHEYAREGKPLPRAIEPRQVTIYDLKVFSDSLKRDHDYPLLRPTTEEAVDTVKNLNANMLNDVLYFSKEYTEKHGLDSEVAKVEEPFPLSEQEEQEIQKEGDSYRAPKLHFKANVSSGTYIRSLVSDIGKSMRSSCYMVKLIRLQQQDWSLEKNNVFQLTDFTERDEKVWSKVLEKVLDEGATVDVIEELKKAEKEIPADVKECIVSSDQPGDEATAETIETANAEEHSNTLKRKIEQV.

D75 (nucleophile) is an active-site residue.

The protein belongs to the pseudouridine synthase TruB family.

It is found in the nucleus. The protein localises to the mitochondrion. It catalyses the reaction uridine(55) in tRNA = pseudouridine(55) in tRNA. The catalysed reaction is a uridine in mRNA = a pseudouridine in mRNA. In terms of biological role, responsible for synthesis of pseudouridine from uracil-55 in the psi GC loop of transfer RNAs. Also catalyzes pseudouridylation of mRNAs with the consensus sequence 5'-GGUUCRA-3'. This Saccharomyces cerevisiae (strain ATCC 204508 / S288c) (Baker's yeast) protein is tRNA pseudouridine synthase 4 (PUS4).